The following is a 350-amino-acid chain: Phenylalanine--tRNA ligase alpha subunit (350 aa).

Glu259 lines the Mg(2+) pocket.

The protein belongs to the class-II aminoacyl-tRNA synthetase family. Phe-tRNA synthetase alpha subunit type 1 subfamily. Tetramer of two alpha and two beta subunits. Requires Mg(2+) as cofactor.

It localises to the cytoplasm. The enzyme catalyses tRNA(Phe) + L-phenylalanine + ATP = L-phenylalanyl-tRNA(Phe) + AMP + diphosphate + H(+). This Rickettsia typhi (strain ATCC VR-144 / Wilmington) protein is Phenylalanine--tRNA ligase alpha subunit.